Here is a 504-residue protein sequence, read N- to C-terminus: Anaerobic nitric oxide reductase transcription regulator NorR (504 aa).

The residue at position 57 (Asp-57) is a 4-aspartylphosphate. Positions 187–416 constitute a Sigma-54 factor interaction domain; sequence MIGLSPGMTQ…LEHAIHRAVV (230 aa). ATP is bound by residues 215–222 and 278–287; these read GETGTGKE and ADNGTLFLDE. Residues 479 to 498 constitute a DNA-binding region (H-T-H motif); it reads WAACARMLETDVANLHRLAK.

The protein operates within nitrogen metabolism; nitric oxide reduction. In terms of biological role, required for the expression of anaerobic nitric oxide (NO) reductase, acts as a transcriptional activator for at least the norVW operon. Activation also requires sigma-54. This chain is Anaerobic nitric oxide reductase transcription regulator NorR, found in Shigella dysenteriae serotype 1 (strain Sd197).